Consider the following 99-residue polypeptide: NADH-quinone oxidoreductase subunit K (99 aa).

A run of 3 helical transmembrane segments spans residues 3 to 23 (PDNYLYLSALLFTIGAAGVLL), 28 to 48 (IVMFMCVELMLNAGNLAFVTF), and 59 to 79 (VVAFFTMVVAACEVVIGLAII).

This sequence belongs to the complex I subunit 4L family. As to quaternary structure, NDH-1 is composed of 14 different subunits. Subunits NuoA, H, J, K, L, M, N constitute the membrane sector of the complex.

The protein localises to the cell membrane. The enzyme catalyses a quinone + NADH + 5 H(+)(in) = a quinol + NAD(+) + 4 H(+)(out). Its function is as follows. NDH-1 shuttles electrons from NADH, via FMN and iron-sulfur (Fe-S) centers, to quinones in the respiratory chain. The immediate electron acceptor for the enzyme in this species is believed to be a menaquinone. Couples the redox reaction to proton translocation (for every two electrons transferred, four hydrogen ions are translocated across the cytoplasmic membrane), and thus conserves the redox energy in a proton gradient. The sequence is that of NADH-quinone oxidoreductase subunit K from Mycolicibacterium gilvum (strain PYR-GCK) (Mycobacterium gilvum (strain PYR-GCK)).